A 264-amino-acid chain; its full sequence is tRNA (guanine-N(1)-)-methyltransferase (264 aa).

Residues glycine 125 and 145–150 (LGDFVL) contribute to the S-adenosyl-L-methionine site.

Belongs to the RNA methyltransferase TrmD family. As to quaternary structure, homodimer.

Its subcellular location is the cytoplasm. The catalysed reaction is guanosine(37) in tRNA + S-adenosyl-L-methionine = N(1)-methylguanosine(37) in tRNA + S-adenosyl-L-homocysteine + H(+). In terms of biological role, specifically methylates guanosine-37 in various tRNAs. The polypeptide is tRNA (guanine-N(1)-)-methyltransferase (Burkholderia ambifaria (strain MC40-6)).